A 397-amino-acid chain; its full sequence is Homocitrate synthase AksA (397 aa).

The region spanning 19–270 (VIVYDTTLRD…DPGFNTEVLA (252 aa)) is the Pyruvate carboxyltransferase domain.

It belongs to the alpha-IPM synthase/homocitrate synthase family.

It carries out the reaction acetyl-CoA + 2-oxoglutarate + H2O = (2R)-homocitrate + CoA + H(+). It catalyses the reaction 2-oxoadipate + acetyl-CoA + H2O = (R)-dihomocitrate + CoA + H(+). The enzyme catalyses 2-oxoheptanedioate + acetyl-CoA + H2O = (R)-trihomocitrate + CoA + H(+). It participates in organic acid metabolism; 2-oxosuberate biosynthesis. In terms of biological role, catalyzes the condensation of alpha-ketoglutarate and acetyl-CoA to form (R)-homocitrate. Can also catalyze the condensation of alpha-ketoadipate with acetyl-CoA to form (R)-homo(2)citrate, and the condensation of alpha-ketopimelate with acetyl-CoA to form (R)-homo(3)citrate. These reactions are part of the biosynthesis pathway of coenzyme B and biotin. The protein is Homocitrate synthase AksA (aksA) of Methanopyrus kandleri (strain AV19 / DSM 6324 / JCM 9639 / NBRC 100938).